Reading from the N-terminus, the 580-residue chain is Cytochrome c oxidase subunit 1 (580 aa).

A disordered region spans residues 1 to 25 (MTAVAPRVDGHVAPQRPEPTGHARK). A helical membrane pass occupies residues 43–63 (IMYIIMSFSFFFLGGLMALLI). Residue His87 participates in Fe(II)-heme a binding. 6 helical membrane passes run 90–110 (VMLLLYGTPIVWGFANYVLPL), 122–142 (LNAFGFWITTVGGVAMLAGFL), 171–191 (MWIIGVGATGIGSVASAINML), 214–234 (IFVTSVLALLIFPLLLAAALG), 259–279 (LFWFFGHPEVYVLALPFFGII), and 292–312 (FGYIGLVFATLSIGALSMAVW). Cu cation is bound by residues His265 and Tyr269. Positions 265-269 (HPEVY) form a cross-link, 1'-histidyl-3'-tyrosine (His-Tyr). His314 and His315 together coordinate Cu cation. A run of 2 helical transmembrane segments spans residues 316 to 336 (MFVTGAVLLPFFSFMTFLISV) and 360 to 380 (MIWAVGFMSTFLFGGLTGIML). His398 is a binding site for heme a3. A run of 3 helical transmembrane segments spans residues 399-419 (FHYTLFGTVVFASCAGVYFWF), 434-454 (IHFWLTFVGFHGTFMVQHWLG), and 477-497 (ISTIFSFLLGLSVIPFVWNVF). Residue His400 participates in Fe(II)-heme a binding.

Belongs to the heme-copper respiratory oxidase family. Associates with subunits II, III and IV to form cytochrome c oxidase. Requires Cu(2+) as cofactor. Heme is required as a cofactor.

It is found in the cell membrane. It carries out the reaction 4 Fe(II)-[cytochrome c] + O2 + 8 H(+)(in) = 4 Fe(III)-[cytochrome c] + 2 H2O + 4 H(+)(out). It functions in the pathway energy metabolism; oxidative phosphorylation. Cytochrome c oxidase is the component of the respiratory chain that catalyzes the reduction of oxygen to water. Subunits 1-3 form the functional core of the enzyme complex. CO I is the catalytic subunit of the enzyme. Electrons originating in cytochrome c are transferred via the copper A center of subunit 2 and heme A of subunit 1 to the bimetallic center formed by heme A3 and copper B. The chain is Cytochrome c oxidase subunit 1 (ctaD) from Corynebacterium efficiens (strain DSM 44549 / YS-314 / AJ 12310 / JCM 11189 / NBRC 100395).